Consider the following 598-residue polypeptide: Ceramide transfer protein (598 aa).

A compositionally biased stretch (polar residues) spans 1-11 (MSDNQSWNSSG). The tract at residues 1–24 (MSDNQSWNSSGSEEDPETESGPPV) is disordered. In terms of domain architecture, PH spans 23 to 117 (PVERCGVLSK…WIDAIEQHKT (95 aa)). Ser126 carries the phosphoserine modification. Residue Ser132 is modified to Phosphoserine; by PKD. Ser135 carries the post-translational modification Phosphoserine. Residues 202–221 (DDEDDFPTTRSDGDFLHNTN) are disordered. Positions 268–301 (KREESWQKRHDKEMEKRRRLEEAYKNAMAELKKK) form a coiled coil. Ser315 is modified (phosphoserine). Positions 321–327 (EFFDAVE) match the FFAT motif. One can recognise an START domain in the interval 363-592 (GTHRFVQKVE…FTSYVQEKTA (230 aa)). Glu446, Gln467, Asn504, and Tyr553 together coordinate an N-acylsphing-4-enine.

Interacts with VAPA and VAPB. Interaction with VAPB is less efficient than with VAPA. Interacts (via FFAT motif) with the MOSPD2 (via MSP domain). Post-translationally, phosphorylation on Ser-132 decreases the affinity toward phosphatidylinositol 4-phosphate at Golgi membranes and reduces ceramide transfer activity. Inactivated by hyperphosphorylation of serine residues by CSNK1G2/CK1 that triggers dissociation from the Golgi complex, thus down-regulating ER-to-Golgi transport of ceramide and sphingomyelin synthesis.

Its subcellular location is the cytoplasm. The protein localises to the golgi apparatus. It localises to the endoplasmic reticulum. The enzyme catalyses N-hexadecanoylsphing-4-enine(in) = N-hexadecanoylsphing-4-enine(out). Shelters ceramides and diacylglycerol lipids inside its START domain and mediates the intracellular trafficking of ceramides and diacylglycerol lipids in a non-vesicular manner. This chain is Ceramide transfer protein (CERT1), found in Cricetulus griseus (Chinese hamster).